A 208-amino-acid polypeptide reads, in one-letter code: Small ribosomal subunit protein eS1 (208 aa).

This sequence belongs to the eukaryotic ribosomal protein eS1 family.

This chain is Small ribosomal subunit protein eS1, found in Saccharolobus islandicus (strain Y.N.15.51 / Yellowstone #2) (Sulfolobus islandicus).